Here is a 240-residue protein sequence, read N- to C-terminus: tRNA (guanine-N(7)-)-methyltransferase (240 aa).

The interval 1-20 (MTESHDTPITSDGEARPHRR) is disordered. S-adenosyl-L-methionine contacts are provided by glutamate 70, glutamate 95, aspartate 122, and aspartate 145. Aspartate 145 is a catalytic residue. Substrate is bound by residues lysine 149, aspartate 181, and 218 to 221 (TKFE).

This sequence belongs to the class I-like SAM-binding methyltransferase superfamily. TrmB family.

The catalysed reaction is guanosine(46) in tRNA + S-adenosyl-L-methionine = N(7)-methylguanosine(46) in tRNA + S-adenosyl-L-homocysteine. It functions in the pathway tRNA modification; N(7)-methylguanine-tRNA biosynthesis. In terms of biological role, catalyzes the formation of N(7)-methylguanine at position 46 (m7G46) in tRNA. The protein is tRNA (guanine-N(7)-)-methyltransferase of Pseudomonas putida (strain ATCC 700007 / DSM 6899 / JCM 31910 / BCRC 17059 / LMG 24140 / F1).